A 1053-amino-acid chain; its full sequence is Zinc finger and BTB domain-containing protein 11 (1053 aa).

The span at 141 to 156 (LDLESGEESNESEDDL) shows a compositional bias: acidic residues. The disordered stretch occupies residues 141–173 (LDLESGEESNESEDDLSNFTSSPTTASKPAKKK). Residues 157-168 (SNFTSSPTTASK) are compositionally biased toward low complexity. A BTB domain is found at 214–282 (CDVTLLIEGE…AYTSVLSFDF (69 aa)). The tract at residues 546–566 (LVQRGKKMKQPKRDAKENTEE) is disordered. Residues 556-566 (PKRDAKENTEE) are compositionally biased toward basic and acidic residues. 2 consecutive C2H2-type zinc fingers follow at residues 569–591 (HKCG…KLKH) and 597–619 (YKCP…LIRH). Residues 619–643 (HTRKDAPSSSSSNSTSNEASGTSSE) form a disordered region. Over residues 626 to 642 (SSSSSNSTSNEASGTSS) the composition is skewed to low complexity. 10 consecutive C2H2-type zinc fingers follow at residues 651 to 673 (FICS…MLKH), 679 to 701 (HACQ…QSLH), 707 to 729 (FQCE…MSIH), 735 to 757 (YLCS…FKKH), 766 to 788 (YHCT…MNKH), 794 to 816 (FQCQ…VKSH), 822 to 846 (YRCN…KATH), 858 to 880 (RVCE…MNNH), 886 to 908 (FECL…VRTH), and 914 to 937 (YVCP…TKFH). K1043 participates in a covalent cross-link: Glycyl lysine isopeptide (Lys-Gly) (interchain with G-Cter in SUMO2). S1050 is subject to Phosphoserine.

The protein localises to the nucleus. The protein resides in the nucleolus. Its function is as follows. May be involved in transcriptional regulation. This Homo sapiens (Human) protein is Zinc finger and BTB domain-containing protein 11.